A 1789-amino-acid polypeptide reads, in one-letter code: Protein sprint (1789 aa).

Disordered stretches follow at residues 53 to 120 (TTAN…AHPP), 140 to 190 (TTTA…DLAN), 218 to 237 (PLWN…HPTG), 261 to 317 (QRMH…QAGL), 329 to 378 (LNNN…DADD), and 401 to 460 (RRSR…PCDL). Residues 82-114 (SINNNKNNNISNKNNNNNNNNNNNINNNNNNNN) show a composition bias toward low complexity. Polar residues predominate over residues 140–149 (TTTANQLQQQ). The segment covering 176–185 (PSEEDGDTDA) has biased composition (acidic residues). The segment covering 223-233 (RNGNGSTTTHC) has biased composition (polar residues). A compositionally biased stretch (low complexity) spans 295 to 317 (NNNNINNNHNGQQSQKSQQQAGL). Positions 337 to 361 (QPGSMTPASNRTGLDSNQNQKQNLN) are enriched in polar residues. Positions 409 to 418 (QSRTSLVSSS) are enriched in low complexity. The segment covering 428 to 445 (TSSEDDEEEPVEAEDEGE) has biased composition (acidic residues). Residues 473-566 (WFLPGIQRSG…ELPVQLMLPR (94 aa)) enclose the SH2 domain. Disordered stretches follow at residues 632–689 (FFSD…SGGQ), 744–787 (TAPE…SANG), 852–918 (GECK…ILES), 969–1006 (DLLA…QSLL), 1040–1067 (AAED…QGSP), 1094–1123 (RSQM…MLQP), and 1138–1160 (PKPK…KRAR). Pro residues predominate over residues 639–649 (KPPPTGAPPLP). Residues 671 to 686 (TPSDTTNSSLSSFTTS) are compositionally biased toward low complexity. The segment covering 857–868 (TLSSQGSSSNDS) has biased composition (polar residues). The span at 903-914 (AGKESQHYKESD) shows a compositional bias: basic and acidic residues. Residues 974–984 (TPSTPTPTQQS) are compositionally biased toward low complexity. Composition is skewed to polar residues over residues 994–1006 (TATP…QSLL) and 1048–1065 (TTPT…SKQG). Residues 1143-1154 (SQQQQQSQQQQQ) are compositionally biased toward low complexity. Positions 1531–1673 (RSEDIQLLAQ…LKTFMASEGE (143 aa)) constitute a VPS9 domain. One can recognise a Ras-associating domain in the interval 1689–1777 (CSSVLRVIIP…CMLAYKRIDA (89 aa)).

Belongs to the RIN (Ras interaction/interference) family. In terms of tissue distribution, in late cellular blastoderm embryos, it is expressed in the posterior end. Then, as development proceeds, it is expressed in the developing midgut, amnioserosa and in a specific subset of CNS neurons. Isoform 1 is expressed earlier in developing midgut and amnioserosa, but is not expressed in the CNS.

Functionally, potential Ras effector protein. May function as a guanine nucleotide exchange (GEF), by exchanging bound GDP for free GTP. The polypeptide is Protein sprint (spri) (Drosophila melanogaster (Fruit fly)).